We begin with the raw amino-acid sequence, 927 residues long: Isoleucine--tRNA ligase (927 aa).

Residues P57–H67 carry the 'HIGH' region motif. E553 is an L-isoleucyl-5'-AMP binding site. The 'KMSKS' region motif lies at K594–S598. Residue K597 participates in ATP binding. Zn(2+) is bound by residues C886, C889, C906, and C909.

Belongs to the class-I aminoacyl-tRNA synthetase family. IleS type 1 subfamily. Monomer. Requires Zn(2+) as cofactor.

It is found in the cytoplasm. It catalyses the reaction tRNA(Ile) + L-isoleucine + ATP = L-isoleucyl-tRNA(Ile) + AMP + diphosphate. Functionally, catalyzes the attachment of isoleucine to tRNA(Ile). As IleRS can inadvertently accommodate and process structurally similar amino acids such as valine, to avoid such errors it has two additional distinct tRNA(Ile)-dependent editing activities. One activity is designated as 'pretransfer' editing and involves the hydrolysis of activated Val-AMP. The other activity is designated 'posttransfer' editing and involves deacylation of mischarged Val-tRNA(Ile). This Lactobacillus helveticus (strain DPC 4571) protein is Isoleucine--tRNA ligase.